Consider the following 544-residue polypeptide: MPLFLILCLLQGSSFALPQKRPHPRWLWEGSLPSRTHLRAMGTLTPSSPLCWQEESSFAAPNALKGSRLVSGEPGGAVTIQCHYAPSSVNRHQRKYWCRLGPPRWICQTIVSTNHYTHHRYRDRVALTDFPQRGLFVVRLSQLSPDDIGCYLCGIGSENNMLFLSMNLTISAGPSSTLPTATPAAGELTMRSYGTASPVANRWTPGTTQTLGQGTAWDTVASTPGTSMTTASAEGRETPGATRLATPGTGSWAEGSVKAPAPIPESPASKAPAPIPESPASKSRSMSNTTEGVWEGTRSLVTNRAKASKDRREITTTKADRPREDTEGVRIALDAAKKVLGTIRPPALVSETLAWEIFPQATPVSKQQSLSSIGETTPAAGMWTLGTPAADVWILGTPTADVWTSMEAASGEGSSAGDLDAATGDRGPQVTLSQAPAVGPWRPPGKESFVKSTFPEDESSSRTLAPVSTMLALFMLMALVLLQRKLRRRRTSQEAERVTLIQMTHFLEVNPQPDQLPHVERKMLQDDSLPAGASLTAPERNPGP.

The signal sequence occupies residues 1–16 (MPLFLILCLLQGSSFA). Over 17–462 (LPQKRPHPRW…TFPEDESSSR (446 aa)) the chain is Extracellular. In terms of domain architecture, Ig-like V-type spans 61 to 169 (PNALKGSRLV…NMLFLSMNLT (109 aa)). The interval 75 to 97 (GGAVTIQCHYAPSSVNRHQRKYW) is mediates immunoglobulin Fc fragment-binding. C82 and C153 are joined by a disulfide. N-linked (GlcNAc...) asparagine glycosylation occurs at N167. Residues 218-325 (DTVASTPGTS…TTKADRPRED (108 aa)) are disordered. 2 stretches are compositionally biased toward polar residues: residues 220–232 (VAST…TTAS) and 280–291 (ASKSRSMSNTTE). Basic and acidic residues predominate over residues 307–325 (ASKDRREITTTKADRPRED). A helical transmembrane segment spans residues 463-483 (TLAPVSTMLALFMLMALVLLQ). At 484–544 (RKLRRRRTSQ…LTAPERNPGP (61 aa)) the chain is on the cytoplasmic side. The disordered stretch occupies residues 511–544 (PQPDQLPHVERKMLQDDSLPAGASLTAPERNPGP).

As to quaternary structure, interacts with IGHM; this interaction facilitates the endocytosis of IgM-coated microbes or IgM-antigen immune complexes. Post-translationally, N-glycosylated.

It localises to the cell membrane. Functions as a receptor for the Fc fragment of IgA and IgM. Binds IgA and IgM with high affinity and mediates their endocytosis. May function in the immune response to microbes mediated by IgA and IgM. The sequence is that of High affinity immunoglobulin alpha and immunoglobulin mu Fc receptor (FCAMR) from Pongo abelii (Sumatran orangutan).